The sequence spans 276 residues: Arginine and glutamate-rich protein 1 (276 aa).

Basic residues-rich tracts occupy residues 1–30 (MGRSRSRSSSRSKHTKSSKHNKKNRSRSRS) and 38–59 (ARKRSKSRESKRNRRRESRSRS). Residues 1-77 (MGRSRSRSSS…RRDRERERER (77 aa)) form a necessary and sufficient for RNA binding region. The disordered stretch occupies residues 1–117 (MGRSRSRSSS…EKKAEFERQR (117 aa)). Basic and acidic residues-rich tracts occupy residues 67-87 (SRRDRERERERASSPPDRIDI) and 96-117 (SSLDEKQKREEEEKKAEFERQR). A necessary and sufficient for transcriptional regulation region spans residues 78–276 (ASSPPDRIDI…KLSFSLKSQD (199 aa)). The short motif at 175–179 (LLEEL) is the LXXLL motif 1; degenerate element. Positions 204–208 (LERIL) match the LXXLL motif 2; degenerate motif. Positions 240-256 (RMKLEQERQRQQKEEQK) are enriched in basic and acidic residues. The disordered stretch occupies residues 240–276 (RMKLEQERQRQQKEEQKIILGKGKSRPKLSFSLKSQD).

Belongs to the ARGLU1 family.

It localises to the nucleus. Its subcellular location is the nucleus speckle. It is found in the chromosome. Its function is as follows. Dual function regulator of gene expression; regulator of transcription and modulator of alternative splicing. General coactivator of nuclear receptor-induced gene expression. The polypeptide is Arginine and glutamate-rich protein 1 (ARGLU1) (Gallus gallus (Chicken)).